The sequence spans 464 residues: NADH-quinone oxidoreductase subunit N 2 (464 aa).

The next 14 membrane-spanning stretches (helical) occupy residues 12–32 (VGIIFLIILELFLPSFDLIGF), 33–53 (LGFLISFISGVLAIKYSLAGY), 62–82 (INAFSLLLKGVMYILTSFVIF), 93–113 (TFVENVYTFLLISLGLSIMVS), 117–137 (LAVILAGLELASISMYISVGM), 152–172 (LVLGSMTTAFFGIGSAFYIGA), 189–209 (FALASLFLFVAFALKVSAAPF), 227–247 (FISTVPKIGFYAVLFLLASYI), 254–274 (FSYIVGIVGVISMFWGNLVAY), 282–304 (MLAYSSIGHAGYFLIGFSRYNPL), 310–330 (IFYVIVYAFATAGAFLVLSIL), 351–371 (PFLATALALFLFALIGIPPFA), 400–420 (IIAAGYYLKLIVYMFFKEPAT), and 434–454 (IGISAFLIIVFFFGIFPNILF).

It belongs to the complex I subunit 2 family. NDH-1 is composed of 14 different subunits. Subunits NuoA, H, J, K, L, M, N constitute the membrane sector of the complex.

The protein localises to the cell inner membrane. It carries out the reaction a quinone + NADH + 5 H(+)(in) = a quinol + NAD(+) + 4 H(+)(out). Its function is as follows. NDH-1 shuttles electrons from NADH, via FMN and iron-sulfur (Fe-S) centers, to quinones in the respiratory chain. The immediate electron acceptor for the enzyme in this species is believed to be ubiquinone. Couples the redox reaction to proton translocation (for every two electrons transferred, four hydrogen ions are translocated across the cytoplasmic membrane), and thus conserves the redox energy in a proton gradient. The chain is NADH-quinone oxidoreductase subunit N 2 from Hydrogenobaculum sp. (strain Y04AAS1).